A 356-amino-acid chain; its full sequence is 1-deoxy-D-xylulose 5-phosphate reductoisomerase (356 aa).

Residues T7, G8, S9, I10, G31, N33, and N111 each contribute to the NADPH site. K112 is a binding site for 1-deoxy-D-xylulose 5-phosphate. E113 is a binding site for NADPH. D131 lines the Mn(2+) pocket. S132, E133, S155, and H178 together coordinate 1-deoxy-D-xylulose 5-phosphate. E133 serves as a coordination point for Mn(2+). Residue G184 participates in NADPH binding. 1-deoxy-D-xylulose 5-phosphate contacts are provided by S191, N196, K197, and E200. E200 serves as a coordination point for Mn(2+).

It belongs to the DXR family. It depends on Mg(2+) as a cofactor. Mn(2+) is required as a cofactor.

It catalyses the reaction 2-C-methyl-D-erythritol 4-phosphate + NADP(+) = 1-deoxy-D-xylulose 5-phosphate + NADPH + H(+). Its pathway is isoprenoid biosynthesis; isopentenyl diphosphate biosynthesis via DXP pathway; isopentenyl diphosphate from 1-deoxy-D-xylulose 5-phosphate: step 1/6. Catalyzes the NADPH-dependent rearrangement and reduction of 1-deoxy-D-xylulose-5-phosphate (DXP) to 2-C-methyl-D-erythritol 4-phosphate (MEP). This chain is 1-deoxy-D-xylulose 5-phosphate reductoisomerase, found in Campylobacter jejuni subsp. jejuni serotype O:6 (strain 81116 / NCTC 11828).